A 705-amino-acid polypeptide reads, in one-letter code: Polyribonucleotide nucleotidyltransferase (705 aa).

Mg(2+) is bound by residues Asp486 and Asp492. The region spanning 553–612 (PRIYKIKINPEKIKDVIGKGGSVIRMLTEKTKSSIEIEDDGTVKVISTDIKNAQCALKKI) is the KH domain. Residues 622-690 (NKIYVAKITR…RYGRIRLSFT (69 aa)) form the S1 motif domain.

The protein belongs to the polyribonucleotide nucleotidyltransferase family. In terms of assembly, component of the RNA degradosome, which is a multiprotein complex involved in RNA processing and mRNA degradation. It depends on Mg(2+) as a cofactor.

Its subcellular location is the cytoplasm. The enzyme catalyses RNA(n+1) + phosphate = RNA(n) + a ribonucleoside 5'-diphosphate. In terms of biological role, involved in mRNA degradation. Catalyzes the phosphorolysis of single-stranded polyribonucleotides processively in the 3'- to 5'-direction. The chain is Polyribonucleotide nucleotidyltransferase from Wigglesworthia glossinidia brevipalpis.